We begin with the raw amino-acid sequence, 180 residues long: ATP-dependent protease subunit HslV (180 aa).

The active site involves threonine 5. Positions 165, 168, and 171 each coordinate Na(+).

The protein belongs to the peptidase T1B family. HslV subfamily. In terms of assembly, a double ring-shaped homohexamer of HslV is capped on each side by a ring-shaped HslU homohexamer. The assembly of the HslU/HslV complex is dependent on binding of ATP.

The protein localises to the cytoplasm. The catalysed reaction is ATP-dependent cleavage of peptide bonds with broad specificity.. Its activity is regulated as follows. Allosterically activated by HslU binding. Functionally, protease subunit of a proteasome-like degradation complex believed to be a general protein degrading machinery. This Helicobacter pylori (strain P12) protein is ATP-dependent protease subunit HslV.